The chain runs to 445 residues: Argininosuccinate synthase (445 aa).

Residues 17 to 25 (AFSGGLDTS) and Ala-43 contribute to the ATP site. Tyr-99 is a binding site for L-citrulline. The ATP site is built by Gly-129 and Thr-131. L-aspartate contacts are provided by Thr-131, Asn-135, and Asp-136. Asn-135 serves as a coordination point for L-citrulline. Asp-136 contributes to the ATP binding site. Residues Arg-139 and Ser-192 each coordinate L-citrulline. Asp-194 contributes to the ATP binding site. L-citrulline is bound by residues Thr-201, Glu-203, and Glu-280.

It belongs to the argininosuccinate synthase family. Type 2 subfamily. As to quaternary structure, homotetramer.

Its subcellular location is the cytoplasm. The enzyme catalyses L-citrulline + L-aspartate + ATP = 2-(N(omega)-L-arginino)succinate + AMP + diphosphate + H(+). It functions in the pathway amino-acid biosynthesis; L-arginine biosynthesis; L-arginine from L-ornithine and carbamoyl phosphate: step 2/3. In Bordetella bronchiseptica (strain ATCC BAA-588 / NCTC 13252 / RB50) (Alcaligenes bronchisepticus), this protein is Argininosuccinate synthase.